We begin with the raw amino-acid sequence, 153 residues long: Pheromone-binding protein Gp-9 (153 aa).

The first 19 residues, 1-19 (MKTFVLHIFIFALVAFASA), serve as a signal peptide directing secretion. 3 disulfides stabilise this stretch: cysteine 37–cysteine 77, cysteine 73–cysteine 129, and cysteine 118–cysteine 138.

This sequence belongs to the PBP/GOBP family. Homodimer.

It localises to the secreted. Colony queen number, a major feature of social organization, is associated with worker genotype for Gp-9. Colonies are headed by either a single reproductive queen (monogyne form) or multiple queens (polygyne form). Differences in worker Gp-9 genotypes between social forms may cause differences in workers' abilities to recognize queens and regulate their numbers. This chain is Pheromone-binding protein Gp-9, found in Solenopsis invicta (Red imported fire ant).